A 43-amino-acid polypeptide reads, in one-letter code: Defensin (43 aa).

3 disulfides stabilise this stretch: Cys3-Cys34, Cys20-Cys39, and Cys24-Cys41.

The protein resides in the secreted. In terms of biological role, antibacterial peptide active against Gram-positive and Gram-negative bacteria. The protein is Defensin of Palomena prasina (Green shield bug).